A 362-amino-acid polypeptide reads, in one-letter code: Glutamate 5-kinase (362 aa).

Residue K3 coordinates ATP. Substrate is bound by residues S43, D128, and N140. ATP is bound by residues 160–161 and 202–208; these read TD and TGGMRTK. A PUA domain is found at 267 to 348; sequence AGAILVDAGA…REIENVLGYS (82 aa).

It belongs to the glutamate 5-kinase family.

Its subcellular location is the cytoplasm. It carries out the reaction L-glutamate + ATP = L-glutamyl 5-phosphate + ADP. It functions in the pathway amino-acid biosynthesis; L-proline biosynthesis; L-glutamate 5-semialdehyde from L-glutamate: step 1/2. Functionally, catalyzes the transfer of a phosphate group to glutamate to form L-glutamate 5-phosphate. The sequence is that of Glutamate 5-kinase from Xanthomonas oryzae pv. oryzae (strain KACC10331 / KXO85).